The following is a 229-amino-acid chain: CMRF35-like molecule 6 (229 aa).

The first 21 residues, 1 to 21 (MNPRVIRLWLPSAVLLSLVPG), serve as a signal peptide directing secretion. Positions 22–126 (HFPVRGPSTV…FYDAYLQIDK (105 aa)) constitute an Ig-like V-type domain. The Extracellular portion of the chain corresponds to 22–188 (HFPVRGPSTV…ELRSLLSSPH (167 aa)). A disulfide bridge connects residues Cys43 and Cys110. Residues Asn90 and Asn99 are each glycosylated (N-linked (GlcNAc...) asparagine). The helical transmembrane segment at 189–209 (FWILVSLKLPLFLSMLGALLW) threads the bilayer. At 210 to 229 (VNRPQRCSGGSSAWPCYENQ) the chain is on the cytoplasmic side.

The protein belongs to the CD300 family.

Its subcellular location is the cell membrane. The protein is CMRF35-like molecule 6 (Cd300c) of Mus musculus (Mouse).